A 123-amino-acid polypeptide reads, in one-letter code: Ribosome-binding factor A (123 aa).

This sequence belongs to the RbfA family. In terms of assembly, monomer. Binds 30S ribosomal subunits, but not 50S ribosomal subunits or 70S ribosomes.

It localises to the cytoplasm. In terms of biological role, one of several proteins that assist in the late maturation steps of the functional core of the 30S ribosomal subunit. Associates with free 30S ribosomal subunits (but not with 30S subunits that are part of 70S ribosomes or polysomes). Required for efficient processing of 16S rRNA. May interact with the 5'-terminal helix region of 16S rRNA. The polypeptide is Ribosome-binding factor A (Neisseria meningitidis serogroup C (strain 053442)).